We begin with the raw amino-acid sequence, 138 residues long: DNA-directed RNA polymerase II subunit 4 (138 aa).

S2 carries the post-translational modification N-acetylserine.

The protein belongs to the eukaryotic RPB4 RNA polymerase subunit family. Component of the RNA polymerase II complex consisting of at least 12 subunits. Interacts with NRPB7.

Its subcellular location is the nucleus. DNA-dependent RNA polymerase catalyzes the transcription of DNA into RNA using the four ribonucleoside triphosphates as substrates. Second largest component of RNA polymerase II which synthesizes mRNA precursors and many functional non-coding RNAs. Proposed to contribute to the polymerase catalytic activity and forms the polymerase active center together with the largest subunit. Pol II is the central component of the basal RNA polymerase II transcription machinery. It is composed of mobile elements that move relative to each other. In Arabidopsis thaliana (Mouse-ear cress), this protein is DNA-directed RNA polymerase II subunit 4 (NRPB4).